Reading from the N-terminus, the 218-residue chain is Probable transaldolase (218 aa).

The Schiff-base intermediate with substrate role is filled by Lys87.

It belongs to the transaldolase family. Type 3B subfamily.

The protein localises to the cytoplasm. The catalysed reaction is D-sedoheptulose 7-phosphate + D-glyceraldehyde 3-phosphate = D-erythrose 4-phosphate + beta-D-fructose 6-phosphate. It functions in the pathway carbohydrate degradation; pentose phosphate pathway; D-glyceraldehyde 3-phosphate and beta-D-fructose 6-phosphate from D-ribose 5-phosphate and D-xylulose 5-phosphate (non-oxidative stage): step 2/3. Transaldolase is important for the balance of metabolites in the pentose-phosphate pathway. The protein is Probable transaldolase of Cytophaga hutchinsonii (strain ATCC 33406 / DSM 1761 / CIP 103989 / NBRC 15051 / NCIMB 9469 / D465).